The chain runs to 105 residues: Thioredoxin (105 aa).

Residues 1–105 enclose the Thioredoxin domain; that stretch reads MANNVTDSSF…SLLDWINKSI (105 aa). Cys-30 and Cys-33 are joined by a disulfide.

This sequence belongs to the thioredoxin family.

Functionally, component of the thioredoxin-thioredoxin reductase system. Participates in various redox reactions through the reversible oxidation of its active center dithiol to a disulfide and catalyzes dithiol-disulfide exchange reactions. This is Thioredoxin (trxA) from Rickettsia felis (strain ATCC VR-1525 / URRWXCal2) (Rickettsia azadi).